A 276-amino-acid polypeptide reads, in one-letter code: Pantothenate synthetase (276 aa).

Position 27–34 (27–34) interacts with ATP; the sequence is MGALHRGH. H34 functions as the Proton donor in the catalytic mechanism. Q58 provides a ligand contact to (R)-pantoate. A beta-alanine-binding site is contributed by Q58. 147–150 lines the ATP pocket; that stretch reads GKKD. Q153 provides a ligand contact to (R)-pantoate. ATP is bound by residues V176 and 184-187; that span reads LSSR.

Belongs to the pantothenate synthetase family. In terms of assembly, homodimer.

It is found in the cytoplasm. It catalyses the reaction (R)-pantoate + beta-alanine + ATP = (R)-pantothenate + AMP + diphosphate + H(+). The protein operates within cofactor biosynthesis; (R)-pantothenate biosynthesis; (R)-pantothenate from (R)-pantoate and beta-alanine: step 1/1. Catalyzes the condensation of pantoate with beta-alanine in an ATP-dependent reaction via a pantoyl-adenylate intermediate. The protein is Pantothenate synthetase of Helicobacter pylori (strain J99 / ATCC 700824) (Campylobacter pylori J99).